A 309-amino-acid chain; its full sequence is uncharacterized protein (309 aa).

Residues 11–87 (QRLDTFLATL…FPLDILYEDE (77 aa)) form the S4 RNA-binding domain. Asp131 is a catalytic residue.

Belongs to the pseudouridine synthase RluA family.

The catalysed reaction is a uridine in RNA = a pseudouridine in RNA. This is an uncharacterized protein from Mycoplasma pneumoniae (strain ATCC 29342 / M129 / Subtype 1) (Mycoplasmoides pneumoniae).